The following is a 185-amino-acid chain: ATP-dependent protease subunit HslV (185 aa).

T13 is an active-site residue. Residues G167, C170, and T173 each coordinate Na(+).

This sequence belongs to the peptidase T1B family. HslV subfamily. A double ring-shaped homohexamer of HslV is capped on each side by a ring-shaped HslU homohexamer. The assembly of the HslU/HslV complex is dependent on binding of ATP.

The protein localises to the cytoplasm. The catalysed reaction is ATP-dependent cleavage of peptide bonds with broad specificity.. With respect to regulation, allosterically activated by HslU binding. Functionally, protease subunit of a proteasome-like degradation complex believed to be a general protein degrading machinery. This chain is ATP-dependent protease subunit HslV, found in Sinorhizobium fredii (strain NBRC 101917 / NGR234).